The primary structure comprises 37 residues: Potassium channel toxin alpha-KTx 11.1 (37 aa).

Intrachain disulfides connect Cys-8-Cys-27, Cys-13-Cys-33, and Cys-17-Cys-35.

This sequence belongs to the short scorpion toxin superfamily. Potassium channel inhibitor family. Alpha-KTx 11 subfamily. As to expression, expressed by the venom gland.

The protein localises to the secreted. In terms of biological role, binds and inhibits voltage-sensitive potassium channels. Inhibits the vertebrate potassium channels Kv1.1/KCNA1, Kv1.2/KCNA2 and Kv1.3/KCNA3 with low affinity. Also weakly inhibits Kv7.1/KCNQ1 (10 uM of the toxin inhibits currents by 21.43%). The polypeptide is Potassium channel toxin alpha-KTx 11.1 (Parabuthus villosus (Black hairy thick-tailed scorpion)).